Consider the following 326-residue polypeptide: Phenylalanine--tRNA ligase alpha subunit (326 aa).

Glu251 contacts Mg(2+).

It belongs to the class-II aminoacyl-tRNA synthetase family. Phe-tRNA synthetase alpha subunit type 1 subfamily. In terms of assembly, tetramer of two alpha and two beta subunits. Mg(2+) is required as a cofactor.

The protein localises to the cytoplasm. The catalysed reaction is tRNA(Phe) + L-phenylalanine + ATP = L-phenylalanyl-tRNA(Phe) + AMP + diphosphate + H(+). The polypeptide is Phenylalanine--tRNA ligase alpha subunit (Idiomarina loihiensis (strain ATCC BAA-735 / DSM 15497 / L2-TR)).